A 345-amino-acid polypeptide reads, in one-letter code: Dihydroorotate dehydrogenase (quinone) (345 aa).

FMN-binding positions include 65-69 (AGLDK) and threonine 89. Lysine 69 is a binding site for substrate. 114–118 (NRMGF) is a binding site for substrate. FMN contacts are provided by asparagine 146 and asparagine 179. Asparagine 179 is a binding site for substrate. Serine 182 acts as the Nucleophile in catalysis. Asparagine 184 lines the substrate pocket. 2 residues coordinate FMN: lysine 224 and threonine 252. 253 to 254 (NT) is a substrate binding site. Residues glycine 275, glycine 304, and 325-326 (YT) each bind FMN.

The protein belongs to the dihydroorotate dehydrogenase family. Type 2 subfamily. In terms of assembly, monomer. The cofactor is FMN.

It localises to the cell membrane. It catalyses the reaction (S)-dihydroorotate + a quinone = orotate + a quinol. It functions in the pathway pyrimidine metabolism; UMP biosynthesis via de novo pathway; orotate from (S)-dihydroorotate (quinone route): step 1/1. Its function is as follows. Catalyzes the conversion of dihydroorotate to orotate with quinone as electron acceptor. The protein is Dihydroorotate dehydrogenase (quinone) of Janthinobacterium sp. (strain Marseille) (Minibacterium massiliensis).